The primary structure comprises 879 residues: Phosphoenolpyruvate carboxylase (879 aa).

Active-site residues include histidine 138 and lysine 545.

Belongs to the PEPCase type 1 family. Requires Mg(2+) as cofactor.

The enzyme catalyses oxaloacetate + phosphate = phosphoenolpyruvate + hydrogencarbonate. In terms of biological role, forms oxaloacetate, a four-carbon dicarboxylic acid source for the tricarboxylic acid cycle. This chain is Phosphoenolpyruvate carboxylase (ppc), found in Haemophilus influenzae (strain ATCC 51907 / DSM 11121 / KW20 / Rd).